A 166-amino-acid polypeptide reads, in one-letter code: 3-isopropylmalate dehydratase small subunit 1 (166 aa).

The protein belongs to the LeuD family. LeuD type 2 subfamily. In terms of assembly, heterodimer of LeuC and LeuD.

It catalyses the reaction (2R,3S)-3-isopropylmalate = (2S)-2-isopropylmalate. It functions in the pathway amino-acid biosynthesis; L-leucine biosynthesis; L-leucine from 3-methyl-2-oxobutanoate: step 2/4. Its function is as follows. Catalyzes the isomerization between 2-isopropylmalate and 3-isopropylmalate, via the formation of 2-isopropylmaleate. This Thermotoga maritima (strain ATCC 43589 / DSM 3109 / JCM 10099 / NBRC 100826 / MSB8) protein is 3-isopropylmalate dehydratase small subunit 1 (leuD1).